We begin with the raw amino-acid sequence, 386 residues long: 8-amino-7-oxononanoate synthase (386 aa).

R31 lines the substrate pocket. Position 109–110 (109–110 (GY)) interacts with pyridoxal 5'-phosphate. Position 134 (H134) interacts with substrate. Pyridoxal 5'-phosphate contacts are provided by residues S180, 205 to 208 (DEAH), and 236 to 239 (TLSK). Residue K239 is modified to N6-(pyridoxal phosphate)lysine. T349 lines the substrate pocket.

It belongs to the class-II pyridoxal-phosphate-dependent aminotransferase family. BioF subfamily. In terms of assembly, homodimer. Requires pyridoxal 5'-phosphate as cofactor.

The catalysed reaction is 6-carboxyhexanoyl-[ACP] + L-alanine + H(+) = (8S)-8-amino-7-oxononanoate + holo-[ACP] + CO2. It functions in the pathway cofactor biosynthesis; biotin biosynthesis. Its function is as follows. Catalyzes the decarboxylative condensation of pimeloyl-[acyl-carrier protein] and L-alanine to produce 8-amino-7-oxononanoate (AON), [acyl-carrier protein], and carbon dioxide. The polypeptide is 8-amino-7-oxononanoate synthase (Mycobacterium bovis (strain ATCC BAA-935 / AF2122/97)).